A 128-amino-acid polypeptide reads, in one-letter code: Translation initiation factor 5A (128 aa).

Lys35 carries the hypusine modification.

Belongs to the eIF-5A family.

The protein resides in the cytoplasm. Its function is as follows. Functions by promoting the formation of the first peptide bond. The protein is Translation initiation factor 5A (eif5a) of Methanosarcina acetivorans (strain ATCC 35395 / DSM 2834 / JCM 12185 / C2A).